The sequence spans 208 residues: Transmembrane protein 160 (208 aa).

Residues Met1–Arg45 constitute a mitochondrion transit peptide. The next 3 membrane-spanning stretches (helical) occupy residues Gly82–Val102, Ala110–Val130, and Val147–Leu167. A compositionally biased stretch (acidic residues) spans Asp181–Glu192. Positions Asp181–Lys208 are disordered. Residues Ala194–Lys208 show a composition bias toward basic and acidic residues.

The protein belongs to the TMEM160 family.

It is found in the mitochondrion inner membrane. The polypeptide is Transmembrane protein 160 (Danio rerio (Zebrafish)).